Here is a 389-residue protein sequence, read N- to C-terminus: (S)-8-oxocitronellyl enol synthase CYC1 (389 aa).

Residues 34-36 (TGI), 62-63 (RR), 80-81 (DV), 104-105 (AW), and glutamine 138 contribute to the NADP(+) site. Residues lysine 142 and tyrosine 174 contribute to the active site. Residues lysine 142 and tyrosine 174 each coordinate substrate. Residues tyrosine 174, valine 201, and 208 to 210 (SMM) contribute to the NADP(+) site. Serine 350 provides a ligand contact to substrate.

The protein belongs to the short-chain dehydrogenases/reductases (SDR) family. Highly divergent.

It carries out the reaction (S)-8-oxocitronellyl enol + NADP(+) = (6E)-8-oxogeranial + NADPH + H(+). The enzyme catalyses (S)-8-oxocitronellyl enol + NAD(+) = (6E)-8-oxogeranial + NADH + H(+). In terms of biological role, iridoid synthase that catalyzes the first step in generation of the iridoid ring scaffold using the linear monoterpene (6E)-8-oxogeranial as substrate. Iridoids comprise a large family of distinctive bicyclic monoterpenes that possess a wide range of pharmacological activities, including anticancer, anti-inflammatory, antifungal and antibacterial activities. The chain is (S)-8-oxocitronellyl enol synthase CYC1 from Camptotheca acuminata (Happy tree).